The primary structure comprises 340 residues: Nuclear hormone receptor family member nhr-197 (340 aa).

Residues 1 to 75 constitute a DNA-binding region (nuclear receptor); that stretch reads MNCVVCSGRA…VGMTLAPLND (75 aa). NR C4-type zinc fingers lie at residues 3-23 and 39-58; these read CVVCSGRATNRNYGAMSCFAC and CKRIQNCTIHFKIFPKCRAC. The region spanning 98-337 is the NR LBD domain; that stretch reads KNDKNYSHFV…KRIMQDLFSN (240 aa).

This sequence belongs to the nuclear hormone receptor family.

The protein resides in the nucleus. Functionally, orphan nuclear receptor. The sequence is that of Nuclear hormone receptor family member nhr-197 (nhr-197) from Caenorhabditis elegans.